The sequence spans 297 residues: Adrenocorticotropic hormone receptor (297 aa).

The Extracellular portion of the chain corresponds to 1-23; the sequence is MKHIITPYEHTNDTARNNSDCPD. N-linked (GlcNAc...) asparagine glycans are attached at residues N12 and N17. Intrachain disulfides connect C21–C253 and C245–C251. Residues 24–49 traverse the membrane as a helical segment; sequence VVLPEEIFFTISIIGVLENLIVLLAV. Topologically, residues 50–58 are cytoplasmic; that stretch reads VKNKNLQCP. Residues 59–79 form a helical membrane-spanning segment; sequence MYFFICSLAISDMLGSLYKIL. The Extracellular portion of the chain corresponds to 80–104; the sequence is ENILIMFRNRGYLQPRGNFESTADD. The helical transmembrane segment at 105–126 threads the bilayer; the sequence is IIDCMFILSLLGSIFSLSVIAA. The Cytoplasmic portion of the chain corresponds to 127-147; that stretch reads DRYITIFHALQYHSIVTMRRT. A helical transmembrane segment spans residues 148 to 168; the sequence is IITLTVIWIFCTGSGIAMVIF. Topologically, residues 169 to 180 are extracellular; it reads SHHVPTVLTFTS. A helical membrane pass occupies residues 181–199; the sequence is LFPLMLVFILCLYIHMFLL. Residues 200–217 are Cytoplasmic-facing; it reads ARSHARKISTLPRANMKG. A helical membrane pass occupies residues 218 to 244; it reads AITLTILLGVFIFCWAPFILHVLLMTF. Over 245–256 the chain is Extracellular; that stretch reads CPNNPYCVCYMS. A helical transmembrane segment spans residues 257–278; sequence LFQINGMLIMCNAVIDPFIYAF. Over 279–297 the chain is Cytoplasmic; the sequence is RSPELRDAFKKMFSCHRYQ. Residue C293 is the site of S-palmitoyl cysteine attachment.

It belongs to the G-protein coupled receptor 1 family. Homodimer. Interacts with corticotropin (ACTH). Interacts with MRAP; this interaction targets MC2R to the plasma membrane. Interacts with MRAP2; competing with MRAP for binding to MC2R and impairing the binding of corticotropin (ACTH). Post-translationally, ubiquitinated by MGRN1 that may be involved in post-endocytic trafficking and/or degradation of internalized receptor.

The protein localises to the cell membrane. Hormone receptor primarily expressed in adrenal cortex that plays a key role in regulating adrenocortical function. Upon corticotropin (ACTH) binding, facilitates the release of adrenal glucocorticoids, including cortisol and corticosterone. In addition, MC2R is required for fetal and neonatal adrenal gland development. Mechanistically, activates adenylate cyclase (cAMP), the MAPK cascade as well as the cAMP-dependent protein kinase A pathway leading to steroidogenic factor 1/NR5A1-mediated transcriptional activation. The sequence is that of Adrenocorticotropic hormone receptor (MC2R) from Mesocricetus auratus (Golden hamster).